We begin with the raw amino-acid sequence, 193 residues long: MNLIPTVIEQTNRGERAYDIYSRLLKDRIIMLGSAIDDNVANSIVSQLLFLESQDPDKDIHLYINSPGGSITAGMAIYDTMQFIKPQVSTICIGMAASMGAFLLAAGEKGKRYALPNSEVMIHQPLGGAQGQATEIEIAAKRILFLREKLNQILADRTGQPLEVLQRDTDRDNFMTAEKALEYGLIDKIFTNR.

Ser-98 serves as the catalytic Nucleophile. His-123 is a catalytic residue.

This sequence belongs to the peptidase S14 family. In terms of assembly, fourteen ClpP subunits assemble into 2 heptameric rings which stack back to back to give a disk-like structure with a central cavity, resembling the structure of eukaryotic proteasomes.

Its subcellular location is the cytoplasm. The catalysed reaction is Hydrolysis of proteins to small peptides in the presence of ATP and magnesium. alpha-casein is the usual test substrate. In the absence of ATP, only oligopeptides shorter than five residues are hydrolyzed (such as succinyl-Leu-Tyr-|-NHMec, and Leu-Tyr-Leu-|-Tyr-Trp, in which cleavage of the -Tyr-|-Leu- and -Tyr-|-Trp bonds also occurs).. In terms of biological role, cleaves peptides in various proteins in a process that requires ATP hydrolysis. Has a chymotrypsin-like activity. Plays a major role in the degradation of misfolded proteins. This chain is ATP-dependent Clp protease proteolytic subunit 2, found in Bacillus cereus (strain ATCC 10987 / NRS 248).